The sequence spans 577 residues: MARLSRERYAQLYGPTTGDRIRLADTDLLVEITEDRCGGPGLAGDEAVFGGGKVLRESMGQGRVTRAEGAPDTVITGAVIIDYWGIIKANIGIRDGRIVAIGKAGNPNIMSGIHPDLVVGPSTEIIGGNGRIVTAGAIDCHVHLICPQVIAEALSSGITTIIGGGTGPAEGSKSTTVTPGGWHLARMLEALDSWPVNIALLGKGNTVNPDALWEQLRGGASGFKLHEDWGKSPAAIDACLTVADAAGVQVALHSDTLNEMGFVEDTLAAIAGRSIHTYHTEGAGGGHAPDIITVAAHPNVLPSSTNPTRPHTVNALDEHLDMLMVCHHLNPRIPDDLAFAESRIRPSTIAAEDLLHDIGAISMIGSDSQAMGRVGEVVMRTWQTAHVMKQRRGALEGDPSGRYSADNNRARRYVAKYTICPAVAHGLDHEVGSVEVGKLADLVLWEPAFFGVRPHAVVKGGAIAWAAMGDANASIPTPQPVLPRPMFGASPAVAAATSVHFVAAQSIEAGLADQIAVDRRLVPVADVRAVGKADMPLNDAQPRIEVDPDTFTVRIDGEVWEQQPATELPMAQRYFLF.

Residues 136–577 (GAIDCHVHLI…LPMAQRYFLF (442 aa)) enclose the Urease domain. Residues His-141, His-143, and Lys-224 each contribute to the Ni(2+) site. At Lys-224 the chain carries N6-carboxylysine. His-226 contacts substrate. His-253 and His-279 together coordinate Ni(2+). The active-site Proton donor is His-327. Position 367 (Asp-367) interacts with Ni(2+).

It belongs to the metallo-dependent hydrolases superfamily. Urease alpha subunit family. As to quaternary structure, heterotrimer of UreA (gamma), UreB (beta) and UreC (alpha) subunits. Three heterotrimers associate to form the active enzyme. Ni cation serves as cofactor. In terms of processing, carboxylation allows a single lysine to coordinate two nickel ions.

It is found in the cytoplasm. The enzyme catalyses urea + 2 H2O + H(+) = hydrogencarbonate + 2 NH4(+). Its pathway is nitrogen metabolism; urea degradation; CO(2) and NH(3) from urea (urease route): step 1/1. This is Urease subunit alpha from Mycobacterium ulcerans (strain Agy99).